A 56-amino-acid polypeptide reads, in one-letter code: Large ribosomal subunit protein bL32 (56 aa).

Residues 1–20 (MAVPKRRTSRSNTRSRRAQW) are compositionally biased toward basic residues. The disordered stretch occupies residues 1–26 (MAVPKRRTSRSNTRSRRAQWKAKAPA).

This sequence belongs to the bacterial ribosomal protein bL32 family.

The sequence is that of Large ribosomal subunit protein bL32 from Parafrankia sp. (strain EAN1pec).